The following is a 205-amino-acid chain: Ribosomal RNA small subunit methyltransferase G (205 aa).

S-adenosyl-L-methionine is bound by residues Gly-73, Leu-78, 124–125 (VE), and Arg-138.

It belongs to the methyltransferase superfamily. RNA methyltransferase RsmG family.

It localises to the cytoplasm. The catalysed reaction is guanosine(527) in 16S rRNA + S-adenosyl-L-methionine = N(7)-methylguanosine(527) in 16S rRNA + S-adenosyl-L-homocysteine. Specifically methylates the N7 position of guanine in position 527 of 16S rRNA. The sequence is that of Ribosomal RNA small subunit methyltransferase G from Actinobacillus pleuropneumoniae serotype 7 (strain AP76).